We begin with the raw amino-acid sequence, 180 residues long: Shikimate kinase (180 aa).

14–19 lines the ATP pocket; it reads GAGKST. Ser18 provides a ligand contact to Mg(2+). Residues Asp36, Arg60, and Gly82 each contribute to the substrate site. Arg120 contributes to the ATP binding site. Substrate is bound at residue Arg139.

The protein belongs to the shikimate kinase family. Monomer. The cofactor is Mg(2+).

The protein resides in the cytoplasm. It catalyses the reaction shikimate + ATP = 3-phosphoshikimate + ADP + H(+). It functions in the pathway metabolic intermediate biosynthesis; chorismate biosynthesis; chorismate from D-erythrose 4-phosphate and phosphoenolpyruvate: step 5/7. Its function is as follows. Catalyzes the specific phosphorylation of the 3-hydroxyl group of shikimic acid using ATP as a cosubstrate. The protein is Shikimate kinase of Chromohalobacter salexigens (strain ATCC BAA-138 / DSM 3043 / CIP 106854 / NCIMB 13768 / 1H11).